Here is a 201-residue protein sequence, read N- to C-terminus: uncharacterized protein (201 aa).

The segment at Met-1–Gly-22 is disordered.

This is an uncharacterized protein from Tomato ringspot virus (isolate raspberry) (ToRSV).